The following is a 575-amino-acid chain: Transmembrane protein 108 (575 aa).

A helical membrane pass occupies residues 9–29; that stretch reads YCQLLSFLLILALTEALAFAI. An interaction with SH3GL2 region spans residues 31–169; it reads EPSPRESLQV…TTTRRPPRPP (139 aa). The interval 65-398 is disordered; the sequence is MLTPNPDGPP…PSRVSESTIS (334 aa). Residues 74–87 show a composition bias toward low complexity; the sequence is PSQAAAPMATPTPR. The segment covering 95 to 115 has biased composition (polar residues); that stretch reads HTISTIAATVTAPHSESSLST. Positions 146-160 are enriched in low complexity; the sequence is PPGATSRPTTAPPRT. Residues 173-407 form an interaction with DST (isoform 1) region; that stretch reads RKGAGNSSRP…SGAKEETVAT (235 aa). Over residues 244–271 the composition is skewed to polar residues; the sequence is YSSSPQPQTVAATTVPSNTSWAPTTTSL. Low complexity predominate over residues 290–318; that stretch reads TFTSQGGTPDATAASGAPVSPQAAPVPSQ. The span at 329 to 352 shows a compositional bias: polar residues; it reads PSHSDSWLTVTPGTSRPLSTSSGV. Residues 353–366 show a composition bias toward low complexity; that stretch reads FTAATGPTPAAFDT. Polar residues predominate over residues 367-398; the sequence is SVSAPSQGIPQGASTTPQAPTHPSRVSESTIS. A helical transmembrane segment spans residues 469 to 489; that stretch reads IAWVILAISVPISSCSVLLTV. Residues 490–575 form an interaction with CYFIP2 region; the sequence is CCMKRKKKTA…FVGNDQVSEI (86 aa).

Interacts with DST (isoform 1). Interacts with SH3GL2. Interacts (via N-terminus) with CYFIP1 and CYFIP2; the interactions associate TMEM108 with the WAVE1 complex. In terms of processing, glycosylated.

It is found in the membrane. Its subcellular location is the postsynaptic density. It localises to the endosome membrane. The protein localises to the cell projection. The protein resides in the axon. It is found in the dendrite. Its subcellular location is the early endosome. Transmembrane protein required for proper cognitive functions. Involved in the development of dentate gyrus (DG) neuron circuitry, is necessary for AMPA receptors surface expression and proper excitatory postsynaptic currents of DG granule neurons. Regulates the organization and stability of the microtubule network of sensory neurons to allow axonal transport. Through the interaction with DST, mediates the docking of the dynein/dynactin motor complex to vesicle cargos for retrograde axonal transport. In hippocampal neurons, required for BDNF-dependent dendrite outgrowth. Cooperates with SH3GL2 and recruits the WAVE1 complex to facilitate actin-dependent BDNF:NTRK2 early endocytic trafficking and mediate signaling from early endosomes. This Homo sapiens (Human) protein is Transmembrane protein 108.